The chain runs to 174 residues: Putative serine protease 46 (174 aa).

The Peptidase S1 domain occupies valine 43–glycine 174. Residues cysteine 68 and cysteine 84 are joined by a disulfide bond. Catalysis depends on charge relay system residues histidine 83 and aspartate 128.

Belongs to the peptidase S1 family.

This is Putative serine protease 46 from Homo sapiens (Human).